The sequence spans 400 residues: Nicotinate phosphoribosyltransferase (400 aa).

Histidine 220 carries the phosphohistidine; by autocatalysis modification.

This sequence belongs to the NAPRTase family. In terms of processing, transiently phosphorylated on a His residue during the reaction cycle. Phosphorylation strongly increases the affinity for substrates and increases the rate of nicotinate D-ribonucleotide production. Dephosphorylation regenerates the low-affinity form of the enzyme, leading to product release.

It carries out the reaction nicotinate + 5-phospho-alpha-D-ribose 1-diphosphate + ATP + H2O = nicotinate beta-D-ribonucleotide + ADP + phosphate + diphosphate. It functions in the pathway cofactor biosynthesis; NAD(+) biosynthesis; nicotinate D-ribonucleotide from nicotinate: step 1/1. In terms of biological role, catalyzes the synthesis of beta-nicotinate D-ribonucleotide from nicotinate and 5-phospho-D-ribose 1-phosphate at the expense of ATP. This is Nicotinate phosphoribosyltransferase from Escherichia coli O127:H6 (strain E2348/69 / EPEC).